We begin with the raw amino-acid sequence, 213 residues long: Histone H1.3 (213 aa).

Serine 1 carries the post-translational modification N-acetylserine. Residues serine 1–lysine 15 show a composition bias toward low complexity. The tract at residues serine 1–valine 41 is disordered. Lysine 15 carries the N6-acetyllysine modification. Residues lysine 35 and lysine 53 each carry the N6-(beta-hydroxybutyryl)lysine modification. In terms of domain architecture, H15 spans alanine 37–lysine 110. Arginine 55 is modified (citrulline). An N6-(beta-hydroxybutyryl)lysine mark is found at lysine 65, lysine 86, and lysine 91. Positions glycine 92 to lysine 213 are disordered. Position 105 is a phosphoserine (serine 105). N6-(beta-hydroxybutyryl)lysine is present on lysine 107. Basic and acidic residues predominate over residues lysine 107–proline 119. Basic residues-rich tracts occupy residues lysine 120 to lysine 131, lysine 138 to lysine 170, and lysine 179 to lysine 213.

This sequence belongs to the histone H1/H5 family. Post-translationally, H1 histones are progressively phosphorylated during the cell cycle, becoming maximally phosphorylated during late G2 phase and M phase, and being dephosphorylated sharply thereafter. In terms of processing, citrullination at Arg-55 (H1R54ci) by PADI4 takes place within the DNA-binding site of H1 and results in its displacement from chromatin and global chromatin decondensation, thereby promoting pluripotency and stem cell maintenance.

The protein localises to the nucleus. It is found in the chromosome. Histones H1 are necessary for the condensation of nucleosome chains into higher-order structures. In Oryctolagus cuniculus (Rabbit), this protein is Histone H1.3.